Reading from the N-terminus, the 189-residue chain is Potassium-transporting ATPase KdpC subunit (189 aa).

A helical membrane pass occupies residues 11–31; the sequence is LFVLLTVITGVLYPVFVTGLA.

This sequence belongs to the KdpC family. As to quaternary structure, the system is composed of three essential subunits: KdpA, KdpB and KdpC.

The protein resides in the cell inner membrane. Its function is as follows. Part of the high-affinity ATP-driven potassium transport (or Kdp) system, which catalyzes the hydrolysis of ATP coupled with the electrogenic transport of potassium into the cytoplasm. This subunit acts as a catalytic chaperone that increases the ATP-binding affinity of the ATP-hydrolyzing subunit KdpB by the formation of a transient KdpB/KdpC/ATP ternary complex. The chain is Potassium-transporting ATPase KdpC subunit from Polynucleobacter asymbioticus (strain DSM 18221 / CIP 109841 / QLW-P1DMWA-1) (Polynucleobacter necessarius subsp. asymbioticus).